The sequence spans 335 residues: DNA-directed RNA polymerase subunit alpha (335 aa).

Residues 1-248 (MTIQTSRTLS…GLFAPLQEVS (248 aa)) are alpha N-terminal domain (alpha-NTD). The interval 256 to 335 (KPDEDNQKNQ…LPRTREKGKA (80 aa)) is alpha C-terminal domain (alpha-CTD).

The protein belongs to the RNA polymerase alpha chain family. In terms of assembly, in cyanobacteria the RNAP catalytic core is composed of 2 alpha, 1 beta, 1 beta', 1 gamma and 1 omega subunit. When a sigma factor is associated with the core the holoenzyme is formed, which can initiate transcription.

The enzyme catalyses RNA(n) + a ribonucleoside 5'-triphosphate = RNA(n+1) + diphosphate. In terms of biological role, DNA-dependent RNA polymerase catalyzes the transcription of DNA into RNA using the four ribonucleoside triphosphates as substrates. In Synechococcus sp. (strain JA-2-3B'a(2-13)) (Cyanobacteria bacterium Yellowstone B-Prime), this protein is DNA-directed RNA polymerase subunit alpha.